The sequence spans 475 residues: Gamma-aminobutyric acid receptor subunit gamma-2 (475 aa).

Residues 1-39 form the signal peptide; it reads MSSPNIWSTGSSVYSTPVFSQKMTVWILLLLSLYPGFTS. Residues 40-275 are Extracellular-facing; it reads QKSDDDYEDY…FDLSRRMGYF (236 aa). 2 N-linked (GlcNAc...) asparagine glycosylation sites follow: Asn-52 and Asn-129. Cys-190 and Cys-204 are oxidised to a cystine. A glycan (N-linked (GlcNAc...) asparagine) is linked at Asn-247. Residues 276 to 296 form a helical membrane-spanning segment; sequence TIQTYIPCTLIVVLSWVSFWI. Residues 297 to 302 are Cytoplasmic-facing; it reads NKDAVP. The chain crosses the membrane as a helical span at residues 303 to 322; it reads ARTSLGITTVLTMTTLSTIA. Residues 323-334 are Extracellular-facing; sequence RKSLPKVSYVTA. Residues 335–359 form a helical membrane-spanning segment; the sequence is MDLFVSVCFIFVFSALVEYGTLHYF. At 360–451 the chain is on the cytoplasmic side; the sequence is VSNRKPSKDK…IHIRIAKMDS (92 aa). Positions 433–450 are interaction with GABARAP; that stretch reads RTGAWRHGRIHIRIAKMD. A helical membrane pass occupies residues 452–472; sequence YARIFFPTAFCLFNLVYWVSY. The Extracellular portion of the chain corresponds to 473-475; it reads LYL.

This sequence belongs to the ligand-gated ion channel (TC 1.A.9) family. Gamma-aminobutyric acid receptor (TC 1.A.9.5) subfamily. GABRG2 sub-subfamily. In terms of assembly, heteropentamer, formed by a combination of alpha (GABRA1-6), beta (GABRB1-3), gamma (GABRG1-3), delta (GABRD), epsilon (GABRE), rho (GABRR1-3), pi (GABRP) and theta (GABRQ) chains, each subunit exhibiting distinct physiological and pharmacological properties. Interacts with GABARAP. Interacts with KIF21B. Identified in a complex of 720 kDa composed of LHFPL4, NLGN2, GABRA1, GABRB2, GABRG2 and GABRB3. Interacts with LHFPL4. Interacts with SHISA7; interaction leads to the regulation of GABA(A) receptor trafficking, channel deactivation kinetics and pharmacology. Palmitoylated by ZDHHC3/GODZ; required for the accumulation of GABA(A) receptors at the postsynaptic membrane of inhibitory GABAergic synapses.

It is found in the postsynaptic cell membrane. Its subcellular location is the cell membrane. It localises to the cell projection. The protein resides in the dendrite. The protein localises to the cytoplasmic vesicle membrane. The enzyme catalyses chloride(in) = chloride(out). Its activity is regulated as follows. Allosterically activated by benzodiazepines. Activated by pentobarbital. Potentiated by etomidate, propofol, pregnanolone. Inhibited by the antagonist bicuculline. Inhibited by zinc ions. Potentiated by histamine. Functionally, gamma subunit of the heteropentameric ligand-gated chloride channel gated by gamma-aminobutyric acid (GABA), a major inhibitory neurotransmitter in the brain. GABA-gated chloride channels, also named GABA(A) receptors (GABAAR), consist of five subunits arranged around a central pore and contain GABA active binding site(s) located at the alpha and beta subunit interface(s). When activated by GABA, GABAARs selectively allow the flow of chloride anions across the cell membrane down their electrochemical gradient. Gamma-2/GABRG2-containing GABAARs are found at both synaptic and extrasynaptic sites. Chloride influx into the postsynaptic neuron following GABAAR opening decreases the neuron ability to generate a new action potential, thereby reducing nerve transmission. GABAARs containing alpha-1 and beta-2 or -3 subunits exhibit synaptogenic activity; the gamma-2 subunit being necessary but not sufficient to induce rapid synaptic contacts formation. Extrasynaptic gamma-2-containing receptors contribute to the tonic GABAergic inhibition. GABAARs function also as histamine receptor where histamine binds at the interface of two neighboring beta subunits and potentiates GABA response in a gamma-2 subunit-controlled manner. This is Gamma-aminobutyric acid receptor subunit gamma-2 from Homo sapiens (Human).